We begin with the raw amino-acid sequence, 307 residues long: Auxin-induced protein PCNT115 (307 aa).

Tyr-64 (proton donor) is an active-site residue. A substrate-binding site is contributed by His-136. 215-225 (SPLGRGFLSSG) contacts NADP(+).

Belongs to the aldo/keto reductase family. Aldo/keto reductase 2 subfamily.

The sequence is that of Auxin-induced protein PCNT115 from Nicotiana tabacum (Common tobacco).